We begin with the raw amino-acid sequence, 106 residues long: MSSSKANQTRVCYQPEDTTFIIIASNGPDVMRWRKDKTVPLTEIVDSFQVFTTSNNKGNEGQLITASKQELENTFGTSKDVDVVTKILTDGKIIPHREHGKHKEVN.

This sequence belongs to the SDO1-like family.

It is found in the cytoplasm. It localises to the nucleus. Functionally, may play a role in RNA metabolism. This is SDO1-like protein C21C3.19 from Schizosaccharomyces pombe (strain 972 / ATCC 24843) (Fission yeast).